Here is a 174-residue protein sequence, read N- to C-terminus: Peptide methionine sulfoxide reductase MsrA (174 aa).

Cys-10 is a catalytic residue.

It belongs to the MsrA Met sulfoxide reductase family.

It catalyses the reaction L-methionyl-[protein] + [thioredoxin]-disulfide + H2O = L-methionyl-(S)-S-oxide-[protein] + [thioredoxin]-dithiol. The enzyme catalyses [thioredoxin]-disulfide + L-methionine + H2O = L-methionine (S)-S-oxide + [thioredoxin]-dithiol. Functionally, has an important function as a repair enzyme for proteins that have been inactivated by oxidation. Catalyzes the reversible oxidation-reduction of methionine sulfoxide in proteins to methionine. In Pseudarthrobacter chlorophenolicus (strain ATCC 700700 / DSM 12829 / CIP 107037 / JCM 12360 / KCTC 9906 / NCIMB 13794 / A6) (Arthrobacter chlorophenolicus), this protein is Peptide methionine sulfoxide reductase MsrA.